Here is a 348-residue protein sequence, read N- to C-terminus: NADH-quinone oxidoreductase subunit H (348 aa).

8 helical membrane-spanning segments follow: residues L10–I30, G82–V102, V115–G135, I161–V181, L199–L219, L251–F271, V287–V307, and L322–L342.

The protein belongs to the complex I subunit 1 family. In terms of assembly, NDH-1 is composed of 14 different subunits. Subunits NuoA, H, J, K, L, M, N constitute the membrane sector of the complex.

It is found in the cell inner membrane. It carries out the reaction a quinone + NADH + 5 H(+)(in) = a quinol + NAD(+) + 4 H(+)(out). In terms of biological role, NDH-1 shuttles electrons from NADH, via FMN and iron-sulfur (Fe-S) centers, to quinones in the respiratory chain. The immediate electron acceptor for the enzyme in this species is believed to be ubiquinone. Couples the redox reaction to proton translocation (for every two electrons transferred, four hydrogen ions are translocated across the cytoplasmic membrane), and thus conserves the redox energy in a proton gradient. This subunit may bind ubiquinone. In Bartonella bacilliformis (strain ATCC 35685 / KC583 / Herrer 020/F12,63), this protein is NADH-quinone oxidoreductase subunit H.